Consider the following 105-residue polypeptide: Thioredoxin (105 aa).

One can recognise a Thioredoxin domain in the interval 1–105 (MVNNVTDISF…SLLDWINKSI (105 aa)). C30 and C33 are disulfide-bonded.

It belongs to the thioredoxin family.

In terms of biological role, component of the thioredoxin-thioredoxin reductase system. Participates in various redox reactions through the reversible oxidation of its active center dithiol to a disulfide and catalyzes dithiol-disulfide exchange reactions. In Rickettsia typhi (strain ATCC VR-144 / Wilmington), this protein is Thioredoxin (trxA).